Here is a 564-residue protein sequence, read N- to C-terminus: MFS-type transporter grgE (564 aa).

Residues 1-10 (MAENQVDPKR) are compositionally biased toward basic and acidic residues. Residues 1 to 52 (MAENQVDPKRNLPLYGAADESTSATDKEDEVENVRQNGSAPPIEEARESNEA) are disordered. A glycan (N-linked (GlcNAc...) asparagine) is linked at Asn37. The next 7 membrane-spanning stretches (helical) occupy residues 60-80 (HGLS…IISL), 101-118 (KVSW…GFQT), 131-151 (TTFL…GVAP), 161-181 (AIAG…IAFS), 192-212 (GLVG…GGAF), 220-240 (WCFY…LIFF), and 262-282 (LVGV…LQYG). The N-linked (GlcNAc...) asparagine glycan is linked to Asn289. The next 7 helical transmembrane spans lie at 293–313 (VIGL…WEYY), 329–349 (ALWA…ILLY), 368–388 (VRNL…GAFV), 392–412 (GIAT…TGLI), 425–445 (IGYQ…PMNI), 462–482 (IFLA…SAFV), and 531–551 (TFAI…FTPW).

Belongs to the major facilitator superfamily.

Its subcellular location is the membrane. Functionally, MFS-type transporter; part of the gene cluster that mediates the biosynthesis of gregatin A, a fungal polyketide featuring an alkylated furanone core. The protein is MFS-type transporter grgE of Penicillium sp.